The primary structure comprises 189 residues: Elongation factor P (189 aa).

The protein belongs to the elongation factor P family.

The protein localises to the cytoplasm. It participates in protein biosynthesis; polypeptide chain elongation. Functionally, involved in peptide bond synthesis. Stimulates efficient translation and peptide-bond synthesis on native or reconstituted 70S ribosomes in vitro. Probably functions indirectly by altering the affinity of the ribosome for aminoacyl-tRNA, thus increasing their reactivity as acceptors for peptidyl transferase. This is Elongation factor P from Campylobacter lari (strain RM2100 / D67 / ATCC BAA-1060).